The sequence spans 1859 residues: Protein TIC 214 (1859 aa).

6 helical membrane-spanning segments follow: residues 18–38 (IINSVVVVGLYYGFLTTFSIG), 64–84 (FITGQLMMFISIYYAPLHLAL), 87–107 (PHTITVLALPYLLFHFFWNNH), 124–144 (LSIQCVFLNNLIFQLFNHFIL), 172–192 (VGWLIGHILFMKWVGLVLFWI), and 221–241 (IFSILLFITCVYYLGRMPAPI). A disordered region spans residues 247-314 (KETSKTEERG…TEEIRVNGKE (68 aa)). Acidic residues predominate over residues 256–268 (GESEEERDVEIET). Basic and acidic residues predominate over residues 273 to 284 (KGTKQEQERSTE). A compositionally biased stretch (acidic residues) spans 295-306 (EKEDPDKIDETE).

The protein belongs to the TIC214 family. Part of the Tic complex.

Its subcellular location is the plastid. It is found in the chloroplast inner membrane. Its function is as follows. Involved in protein precursor import into chloroplasts. May be part of an intermediate translocation complex acting as a protein-conducting channel at the inner envelope. This Buxus microphylla (Littleleaf boxwood) protein is Protein TIC 214.